Reading from the N-terminus, the 283-residue chain is Protein boule-like (283 aa).

The segment at methionine 1–proline 25 is disordered. The RRM domain maps to asparagine 33–arginine 110. The 25-residue stretch at proline 160–glutamine 184 folds into the DAZ domain.

This sequence belongs to the RRM DAZ family. In terms of assembly, interacts with DAZ1 and DAZL. Testis specific. Not expressed in early embryos, primordial germ cells and spermatogonial cells. First expressed in the cytoplasm of spermatocytes and then persists through meiosis.

The protein localises to the cytoplasm. Its function is as follows. Probable RNA-binding protein, which may be required during spermatogenesis. May act by binding to the 3'-UTR of mRNAs and regulating their translation. This chain is Protein boule-like (BOLL), found in Homo sapiens (Human).